A 687-amino-acid chain; its full sequence is Chloride channel protein ClC-Kb (687 aa).

Topologically, residues 1–50 (MEELVGLREGASKKPVPLQELWGPCPRIRRNIQGGLEWLKERLFRVGEDW) are cytoplasmic. 2 helical membrane-spanning segments follow: residues 51–82 (YFLV…KWLY) and 91–111 (LRYL…SGFS). An intramembrane region (helical) is located at residues 116 to 127 (PSSGGSGIPEVK). Serine 121 contributes to the chloride binding site. Helical transmembrane passes span 141 to 160 (IKNF…TGST) and 161 to 180 (IFLG…AAYL). Residues 203-224 (AGAAVGVATVFAAPISGVLFSI) constitute an intramembrane region (helical). A helical transmembrane segment spans residues 236 to 255 (YWRGFFAATCGAFMFHLLAV). Ca(2+) is bound by residues glutamate 259, glutamate 261, aspartate 278, and glutamate 281. 2 helical membrane-spanning segments follow: residues 282–310 (IFFF…LFFL) and 325–342 (PLYS…TYPP). The helical intramembrane region spans 349–360 (ASRLSMSEHLET). The next 2 membrane-spanning stretches (helical) occupy residues 400–420 (GTLV…TTIP) and 421–440 (IPAG…GRLF). Residue phenylalanine 426 participates in chloride binding. Residues 464–496 (GAYALAGAAAFSGAVTHTLSTALLAFEVTGQLV) constitute an intramembrane region (helical). The chain crosses the membrane as a helical span at residues 500 to 520 (PVLMAVLAANAISQSFQPSFY). The Cytoplasmic segment spans residues 521 to 687 (DGTIIVKKLP…STLTNPPAPK (167 aa)). 2 consecutive CBS domains span residues 551–609 (MNCA…EPAS) and 626–687 (CPTQ…PAPK).

Belongs to the chloride channel (TC 2.A.49) family. CLCNKB subfamily. As to quaternary structure, homodimer. Interacts with BSND. In terms of processing, N-glycosylated. In terms of tissue distribution, specifically expressed in the kidney, predominantly in the outer medulla and cortex. All nephron segments expressing BSND also express CLCNK proteins.

It is found in the basolateral cell membrane. It carries out the reaction chloride(in) = chloride(out). The catalysed reaction is iodide(out) = iodide(in). The enzyme catalyses nitrate(in) = nitrate(out). It catalyses the reaction bromide(in) = bromide(out). Anion-selective channel permeable to small monovalent anions with ion selectivity for chloride &gt; bromide &gt; nitrate &gt; iodide. Forms a homodimeric channel where each subunit has its own ion conduction pathway. May conduct double-barreled currents controlled by two types of gates, two fast gates that control each subunit independently and a slow common gate that opens and shuts off both subunits simultaneously. Assembles with the regulatory subunit BSND/Barttin for sorting at the basolateral plasma membrane domain and functional switch to the ion conducting state. CLCNKB:BSND channels display mostly a linear current-voltage relationship controlled by common gate. Mediates chloride conductance along nephron segments, namely the thick ascending limb of Henle's loop, convoluted tubule and the collecting duct, contributing to the maintenance of systemic acid-base and electrolyte homeostasis. Conducts chloride currents in the stria vascularis of the inner ear to establish the endocochlear potential necessary for normal hearing. The chain is Chloride channel protein ClC-Kb from Mus musculus (Mouse).